We begin with the raw amino-acid sequence, 440 residues long: MTTRQPLYKSLYVQVLVAITIGILLGHYYPETGVALKPLGDGFVKLIKMVIAPIIFCTVVSGIAGMQSMKSVGKTGGYALLYFEIVSTIALIIGLVVVNVVKPGAGMHIDVSTLNASSVAAYAAAGAQQTTVGFLLNVIPNTVVGAFANGDILQVLMFSVLFGFALHRLGSYGKPVLDMIDRFAHVMFNIINMIMKLAPIGAFGAMAFTIGQYGVGSLVQLGYLMACFYITCLLFVLVVLGGICRAHGFSVIKLIRYIREELLIVLGTSSSESALPRMLAKMERLGAKKSVVGLVIPTGYSFNLDGTSIYLTMAAVFIAQATDTTMDITHQITLLLVLLVASKGAAGVTGSGFIVLAATLSAVGHLPVAGLALILGIDRFMSEARALTNLVGNAVATVVVAKWVKEMDNDKLASELDSGGAPLIDTRPTDDLGVAEGPAR.

9 helical membrane passes run 7 to 29 (LYKS…GHYY), 49 to 66 (MVIA…IAGM), 79 to 101 (ALLY…VNVV), 143 to 165 (VVGA…FGFA), 186 to 208 (VMFN…AMAF), 221 to 243 (LGYL…LGGI), 291 to 313 (VVGL…YLTM), 328 to 350 (ITHQ…GVTG), and 355 to 377 (VLAA…ILGI). The interval 419–440 (GGAPLIDTRPTDDLGVAEGPAR) is disordered.

The protein belongs to the dicarboxylate/amino acid:cation symporter (DAACS) (TC 2.A.23) family.

It is found in the cell inner membrane. In terms of biological role, responsible for the transport of dicarboxylates such as succinate, fumarate, and malate from the periplasm across the membrane. This Pseudomonas putida (strain ATCC 47054 / DSM 6125 / CFBP 8728 / NCIMB 11950 / KT2440) protein is C4-dicarboxylate transport protein.